The following is a 162-amino-acid chain: Flagellar assembly factor FliW (162 aa).

The protein belongs to the FliW family. In terms of assembly, interacts with translational regulator CsrA and flagellin(s).

The protein resides in the cytoplasm. In terms of biological role, acts as an anti-CsrA protein, binds CsrA and prevents it from repressing translation of its target genes, one of which is flagellin. Binds to flagellin and participates in the assembly of the flagellum. This Magnetococcus marinus (strain ATCC BAA-1437 / JCM 17883 / MC-1) protein is Flagellar assembly factor FliW.